Here is a 238-residue protein sequence, read N- to C-terminus: Flagellar L-ring protein (238 aa).

The signal sequence occupies residues 1–17; it reads MIRKTLAASCAVLLMAG. C18 is lipidated: N-palmitoyl cysteine. C18 carries the S-diacylglycerol cysteine lipid modification.

Belongs to the FlgH family. As to quaternary structure, the basal body constitutes a major portion of the flagellar organelle and consists of four rings (L,P,S, and M) mounted on a central rod.

Its subcellular location is the cell outer membrane. The protein localises to the bacterial flagellum basal body. Functionally, assembles around the rod to form the L-ring and probably protects the motor/basal body from shearing forces during rotation. This is Flagellar L-ring protein from Nitratidesulfovibrio vulgaris (strain ATCC 29579 / DSM 644 / CCUG 34227 / NCIMB 8303 / VKM B-1760 / Hildenborough) (Desulfovibrio vulgaris).